The following is a 250-amino-acid chain: 1-(5-phosphoribosyl)-5-[(5-phosphoribosylamino)methylideneamino] imidazole-4-carboxamide isomerase (250 aa).

Asp8 serves as the catalytic Proton acceptor. Residue Asp131 is the Proton donor of the active site.

The protein belongs to the HisA/HisF family.

It localises to the cytoplasm. It catalyses the reaction 1-(5-phospho-beta-D-ribosyl)-5-[(5-phospho-beta-D-ribosylamino)methylideneamino]imidazole-4-carboxamide = 5-[(5-phospho-1-deoxy-D-ribulos-1-ylimino)methylamino]-1-(5-phospho-beta-D-ribosyl)imidazole-4-carboxamide. It participates in amino-acid biosynthesis; L-histidine biosynthesis; L-histidine from 5-phospho-alpha-D-ribose 1-diphosphate: step 4/9. The chain is 1-(5-phosphoribosyl)-5-[(5-phosphoribosylamino)methylideneamino] imidazole-4-carboxamide isomerase from Paraburkholderia phymatum (strain DSM 17167 / CIP 108236 / LMG 21445 / STM815) (Burkholderia phymatum).